The sequence spans 142 residues: Putative pterin-4-alpha-carbinolamine dehydratase (142 aa).

It belongs to the pterin-4-alpha-carbinolamine dehydratase family.

The enzyme catalyses (4aS,6R)-4a-hydroxy-L-erythro-5,6,7,8-tetrahydrobiopterin = (6R)-L-erythro-6,7-dihydrobiopterin + H2O. In Caenorhabditis elegans, this protein is Putative pterin-4-alpha-carbinolamine dehydratase (pcbd-1).